We begin with the raw amino-acid sequence, 1330 residues long: MQNTTVHGLYFCHPTSIDGNPELLAVSRRSLSRGDHVTFTASQCRPKRLQCCQWHSCTISSTHIPTKDDLGKSFAYLRLLFSLDYTIADVLLIIGGLLFAICAGIPFPLLGIVFGDLINDLNTVTCSSSDRATADLSSAVRAKVLYVIYITIANFCFIYAHSTCWCLVSERLARRYRRRYFESIIKQEAKFIESLPSGDVVSRLVSDIELVQSGTSEKVGLVISTLSYFVAAYVVAFIKVPKIAGMLVSVVPCFFLMALGGGHYIKKFAGRLAEKVNAATSIASSSLSHLTLVHAFNANDRLEKRFAGYLLQSRKDAVRKATTHAAQLGCLYFIAYSANALAFWEGSQMISKSVADGNSGTSVGAVYTVIFVLIDASFILSQVAPFIHVFASAAGASERLLQVINRPSAIDGTSDSGDKTAAFGEEDIRFRDVHFKYPSRPDVPVLQGVTFNIPPKKHTAIVGPSGGGKSTVVALLERFYDPDSGDVLIGDKNFRDINVRYLRGNIGYVQQEPSLLDRTILENIAYGLVCVTEIVDLVKEAAANANALGFIEALPYGFATNVGTAGNQLSGGQKQRIALARALVREPCLLILDEATAALDSTSEQLIQAALNRVSERVTTVSIAHRLATAKNAHKIVVVQSGRVTEEGSHTDLVSRGGVYAEMVRLQNLGKLSLDDRVISGDMISALNATPETRQLLDEKQAFVDGNRSDITEDTVVADTPSDSRDGSEEEARKKRKRTRSAGFVTRYTFALIRPNLHWVLLGLAMSVIIGGSYSAEAIVFGHTVGSLSPCRSAEAISRDGNLYGLLFFILALVEFGANVVGGCAFGWAADKVLYRIRVLSLRSLLGQTVKWHESEDRTPGTLLTYITGDASALGGITGTTIGLLLATAVNLIGGLVISFSIAWKITIVLFPTIPVLLVSGMMKLRVQKQLAERHQKAFAKATAVTIEAVDNIRAVSAFSLEKQSYQVYGRALRGPYRATIKATFHGNAWLALAFSISNLVYALAYWWGSKQIAEGRYSQTQFFIVMPALLFSTQSCGQMFALAPDISKAGVASSNIVELLTTRSAEDEVTPGSSHSFQPSSSMGAQLRDVHFTYPHRPERPVLKGLNIDIKPGQFCALVGPSGSGKSTTFAMLERFYRPNAGAVVIDGVDVTRQVGTEFRDDIALVPQQNILFEGTVAFNVALGACPGHEPTQEEIEEACRMANIHDVIMTLPQGYQTMCSHDGKQFSGGQRQRLSIARALVRKPRLLLLDESTSALDVESEKRIQEALATLAGRTTVVAIAHRLNTIHRADQIFLIEDGRCIEQGTHQQLIQRSETYRTSVIHQSLET.

N-linked (GlcNAc...) asparagine glycosylation occurs at Asn3. The next 6 membrane-spanning stretches (helical) occupy residues 90-110 (VLLI…FPLL), 144-164 (VLYV…HSTC), 218-238 (KVGL…VAFI), 243-263 (IAGM…GGGH), 324-344 (HAAQ…LAFW), and 370-390 (IFVL…IHVF). An ABC transmembrane type-1 1 domain is found at 94-392 (IGGLLFAICA…VAPFIHVFAS (299 aa)). In terms of domain architecture, ABC transporter 1 spans 428 to 666 (IRFRDVHFKY…GGVYAEMVRL (239 aa)). 463–470 (GPSGGGKS) is a binding site for ATP. N-linked (GlcNAc...) asparagine glycosylation occurs at Asn707. The tract at residues 717 to 736 (VADTPSDSRDGSEEEARKKR) is disordered. Residues 722–733 (SDSRDGSEEEAR) show a composition bias toward basic and acidic residues. The next 6 helical transmembrane spans lie at 761-781 (LLGL…AIVF), 806-826 (LLFF…GCAF), 871-893 (ASAL…VNLI), 903-923 (AWKI…SGMM), 989-1009 (AWLA…YWWG), and 1023-1043 (FFIV…MFAL). Residues 761 to 1049 (LLGLAMSVII…MFALAPDISK (289 aa)) form the ABC transmembrane type-1 2 domain. An ABC transporter 2 domain is found at 1086–1325 (AQLRDVHFTY…SETYRTSVIH (240 aa)). 1121–1128 (GPSGSGKS) serves as a coordination point for ATP.

This sequence belongs to the ABC transporter superfamily. ABCB family. Multidrug resistance exporter (TC 3.A.1.201) subfamily.

The protein localises to the cell membrane. The enzyme catalyses itraconazole(in) + ATP + H2O = itraconazole(out) + ADP + phosphate + H(+). The catalysed reaction is voriconazole(in) + ATP + H2O = voriconazole(out) + ADP + phosphate + H(+). Its function is as follows. Pleiotropic ABC efflux transporter that confers resistance to azoles such as itraconazole and voriconazole. This Aspergillus fumigatus (strain ATCC MYA-4609 / CBS 101355 / FGSC A1100 / Af293) (Neosartorya fumigata) protein is ABC multidrug transporter mdr4.